The following is a 379-amino-acid chain: Transcription factor bHLH122 (379 aa).

Residues 1 to 17 (MESEFQQHHFLLHDHQH) are compositionally biased toward basic and acidic residues. Residues 1 to 21 (MESEFQQHHFLLHDHQHQRPR) are disordered. At S74 the chain carries Phosphoserine. 3 disordered regions span residues 79-98 (TFNSDGTEKKPPEVKTEDED), 133-156 (SVSRNKRPREKDDRTPVNNLARHN), and 190-286 (TSNT…MSLP). Over residues 84-93 (GTEKKPPEVK) the composition is skewed to basic and acidic residues. Over residues 190 to 200 (TSNTEASSLTP) the composition is skewed to polar residues. Phosphoserine occurs at positions 213 and 234. Over residues 235–261 (GGFNRSFGNEGSASSKLTALARTQSGG) the composition is skewed to polar residues. The span at 265–274 (YKTKDEDSAS) shows a compositional bias: basic and acidic residues. Positions 310-360 (CATHPRSIAERVRRTKISERMRKLQDLVPNMDTQTNTADMLDLAVQYIKDL) constitute a bHLH domain.

Homodimer.

The protein localises to the nucleus. The sequence is that of Transcription factor bHLH122 (BHLH122) from Arabidopsis thaliana (Mouse-ear cress).